A 185-amino-acid chain; its full sequence is Homeobox expressed in ES cells 1 (185 aa).

The segment at residues 108 to 167 is a DNA-binding region (homeobox); the sequence is GRRPRTAFTQNQIEVLENVFRVNCYPGIDIREDLAQKLNLEEDRIQIWFQNRRAKLKRSH.

This sequence belongs to the ANF homeobox family. In terms of assembly, can form heterodimers with PROP1 in binding to DNA. Interacts with TLE1.

Its subcellular location is the nucleus. In terms of biological role, required for the normal development of the forebrain, eyes and other anterior structures such as the olfactory placodes and pituitary gland. Possible transcriptional repressor. Binds to the palindromic PIII sequence, 5'-AGCTTGAGTCTAATTGAATTAACTGTAC-3'. HESX1 and PROP1 bind as heterodimers on this palindromic site, and, in vitro, HESX1 can antagonize PROP1 activation. The protein is Homeobox expressed in ES cells 1 (HESX1) of Pan troglodytes (Chimpanzee).